We begin with the raw amino-acid sequence, 466 residues long: Glutamate--tRNA ligase 1 (466 aa).

A 'HIGH' region motif is present at residues 9–19 (PSPTGMLHIGG). The 'KMSKS' region motif lies at 238–242 (KLSKR). ATP is bound at residue Lys241.

This sequence belongs to the class-I aminoacyl-tRNA synthetase family. Glutamate--tRNA ligase type 1 subfamily. As to quaternary structure, monomer.

Its subcellular location is the cytoplasm. The enzyme catalyses tRNA(Glu) + L-glutamate + ATP = L-glutamyl-tRNA(Glu) + AMP + diphosphate. Catalyzes the attachment of glutamate to tRNA(Glu) in a two-step reaction: glutamate is first activated by ATP to form Glu-AMP and then transferred to the acceptor end of tRNA(Glu). The chain is Glutamate--tRNA ligase 1 from Acidiphilium cryptum (strain JF-5).